A 589-amino-acid chain; its full sequence is Isocitrate dehydrogenase kinase/phosphatase (589 aa).

ATP-binding positions include 322–328 and lysine 343; that span reads APGIRGL. Aspartate 378 is a catalytic residue.

It belongs to the AceK family.

It is found in the cytoplasm. The catalysed reaction is L-seryl-[isocitrate dehydrogenase] + ATP = O-phospho-L-seryl-[isocitrate dehydrogenase] + ADP + H(+). Bifunctional enzyme which can phosphorylate or dephosphorylate isocitrate dehydrogenase (IDH) on a specific serine residue. This is a regulatory mechanism which enables bacteria to bypass the Krebs cycle via the glyoxylate shunt in response to the source of carbon. When bacteria are grown on glucose, IDH is fully active and unphosphorylated, but when grown on acetate or ethanol, the activity of IDH declines drastically concomitant with its phosphorylation. The sequence is that of Isocitrate dehydrogenase kinase/phosphatase from Azoarcus sp. (strain BH72).